The chain runs to 357 residues: Phosphoserine aminotransferase (357 aa).

Residue arginine 41 coordinates L-glutamate. Pyridoxal 5'-phosphate is bound by residues 75-76, tryptophan 100, threonine 150, aspartate 170, and glutamine 193; that span reads GT. An N6-(pyridoxal phosphate)lysine modification is found at lysine 194. Position 234-235 (234-235) interacts with pyridoxal 5'-phosphate; sequence NT.

It belongs to the class-V pyridoxal-phosphate-dependent aminotransferase family. SerC subfamily. As to quaternary structure, homodimer. Pyridoxal 5'-phosphate is required as a cofactor.

The protein resides in the cytoplasm. It catalyses the reaction O-phospho-L-serine + 2-oxoglutarate = 3-phosphooxypyruvate + L-glutamate. The enzyme catalyses 4-(phosphooxy)-L-threonine + 2-oxoglutarate = (R)-3-hydroxy-2-oxo-4-phosphooxybutanoate + L-glutamate. Its pathway is amino-acid biosynthesis; L-serine biosynthesis; L-serine from 3-phospho-D-glycerate: step 2/3. Catalyzes the reversible conversion of 3-phosphohydroxypyruvate to phosphoserine and of 3-hydroxy-2-oxo-4-phosphonooxybutanoate to phosphohydroxythreonine. This chain is Phosphoserine aminotransferase, found in Lactiplantibacillus plantarum (strain ATCC BAA-793 / NCIMB 8826 / WCFS1) (Lactobacillus plantarum).